The chain runs to 755 residues: Thermostable beta-glucosidase B (755 aa).

Aspartate 231 is a catalytic residue.

The protein belongs to the glycosyl hydrolase 3 family.

The catalysed reaction is Hydrolysis of terminal, non-reducing beta-D-glucosyl residues with release of beta-D-glucose.. The protein operates within glycan metabolism; cellulose degradation. The sequence is that of Thermostable beta-glucosidase B (bglB) from Acetivibrio thermocellus (strain ATCC 27405 / DSM 1237 / JCM 9322 / NBRC 103400 / NCIMB 10682 / NRRL B-4536 / VPI 7372) (Clostridium thermocellum).